The chain runs to 624 residues: RDLLLSQLCFLASVALLLWSLSSLREQKELDLMDLIGEDRKWMVGRKLMQVNDTLTSEDAGLRSSKNCTEPALHEFPRDIFSNEDRRQGAVVLHVLCAMYMFYALAIVCDDFFVPSLEKICERLHLSEDVAGATFMAAGSSAPELFTSVIGVFITKGDVGVGTIVGSAVFNILCIIGVCGLFAGQVVALSSWCLLRDSIYYTLSVVALIVFIYDEKVSWWESLVLVLMYLIYIIIMKYNACIHQCFERRTKGAGNMVNGLANNAEIDDSSNCDATVVLLKKANFHRKASVIMVDELLSAYPHQLSFSEAGLRIMITSHFPPKTRLSMASRMLINERQRLINSRAYTNGESEVAIKIPIKHTVENGTGPSSAPDRGVNGTRRDDIVAEADNETENENEDENNENDEEEDEDDDEGPYTPFDPPSGKLETVKWAFTWPLSFVLYFTVPNCNKPHWEKWFMVTFASSTLWIAAFSYMMVWMVTIIGYTLGIPDVIMGITFLAAGTSVPDCMASLIVARQGMGDMAVSNSIGSNVFDILIGLGLPWALQTLAVDYGSYIRLNSRGLIYSVGLLLASVFVTVFGVHLNKWQLDKKLGCGCLFLYGVFLCFSIMTEFNVFTFVNLPMCGD.

The N-terminal stretch at 1–25 is a signal peptide; that stretch reads RDLLLSQLCFLASVALLLWSLSSLR. At 26–88 the chain is on the extracellular side; that stretch reads EQKELDLMDL…DIFSNEDRRQ (63 aa). 2 N-linked (GlcNAc...) asparagine glycosylation sites follow: asparagine 52 and asparagine 67. A helical transmembrane segment spans residues 89–109; the sequence is GAVVLHVLCAMYMFYALAIVC. Residues 110–133 are Cytoplasmic-facing; that stretch reads DDFFVPSLEKICERLHLSEDVAGA. The Alpha-1 repeat unit spans residues 130 to 170; it reads VAGATFMAAGSSAPELFTSVIGVFITKGDVGVGTIVGSAVF. The chain crosses the membrane as a helical span at residues 134–154; the sequence is TFMAAGSSAPELFTSVIGVFI. Residues 155-163 are Extracellular-facing; the sequence is TKGDVGVGT. A helical transmembrane segment spans residues 164 to 184; that stretch reads IVGSAVFNILCIIGVCGLFAG. Residues 185-191 are Cytoplasmic-facing; that stretch reads QVVALSS. Residues 192–212 form a helical membrane-spanning segment; that stretch reads WCLLRDSIYYTLSVVALIVFI. Topologically, residues 213–215 are extracellular; the sequence is YDE. The chain crosses the membrane as a helical span at residues 216-236; the sequence is KVSWWESLVLVLMYLIYIIIM. Over 237–465 the chain is Cytoplasmic; the sequence is KYNACIHQCF…WFMVTFASST (229 aa). Serine 289 bears the Phosphoserine mark. Residues 386 to 414 are compositionally biased toward acidic residues; the sequence is AEADNETENENEDENNENDEEEDEDDDEG. A disordered region spans residues 386 to 421; that stretch reads AEADNETENENEDENNENDEEEDEDDDEGPYTPFDP. Residues 466 to 486 form a helical membrane-spanning segment; the sequence is LWIAAFSYMMVWMVTIIGYTL. Residues 487-491 lie on the Extracellular side of the membrane; that stretch reads GIPDV. The helical transmembrane segment at 492–512 threads the bilayer; it reads IMGITFLAAGTSVPDCMASLI. Residues 499 to 530 form an Alpha-2 repeat; sequence AAGTSVPDCMASLIVARQGMGDMAVSNSIGSN. At 513–530 the chain is on the cytoplasmic side; it reads VARQGMGDMAVSNSIGSN. The chain crosses the membrane as a helical span at residues 531 to 551; that stretch reads VFDILIGLGLPWALQTLAVDY. The Extracellular segment spans residues 552 to 561; the sequence is GSYIRLNSRG. Residues 562 to 582 form a helical membrane-spanning segment; sequence LIYSVGLLLASVFVTVFGVHL. The Cytoplasmic segment spans residues 583–596; it reads NKWQLDKKLGCGCL. The helical transmembrane segment at 597–617 threads the bilayer; sequence FLYGVFLCFSIMTEFNVFTFV. Residues 618–624 are Extracellular-facing; that stretch reads NLPMCGD.

The protein belongs to the Ca(2+):cation antiporter (CaCA) (TC 2.A.19) family. SLC24A subfamily. Abundant in the brain. Expressed at low levels in the aorta, uterus and intestine.

The protein localises to the cell membrane. It catalyses the reaction Ca(2+)(out) + K(+)(out) + 4 Na(+)(in) = Ca(2+)(in) + K(+)(in) + 4 Na(+)(out). Calcium, potassium:sodium antiporter that transports 1 Ca(2+) and 1 K(+) in exchange for 4 Na(+). The protein is Sodium/potassium/calcium exchanger 3 (Slc24a3) of Rattus norvegicus (Rat).